A 359-amino-acid polypeptide reads, in one-letter code: Golgi-resident adenosine 3',5'-bisphosphate 3'-phosphatase (359 aa).

Met-1 carries the post-translational modification N-acetylmethionine. The Cytoplasmic segment spans residues 1–12 (MAPMGIRLSPLG). The chain crosses the membrane as a helical span at residues 13-33 (VAVFCLLGLGVLYHLYSGFLA). The Lumenal portion of the chain corresponds to 34 to 359 (GRFSLFGLGG…LPDLEKTGHK (326 aa)). The segment at 86-106 (ESNVLHEKSKGKTREGAEDKM) is disordered. Catalysis depends on Asp-110, which acts as the Proton acceptor. Residues Glu-133, Asp-174, Leu-176, and Asp-177 each contribute to the Mg(2+) site. The active-site Proton acceptor is the Thr-179. Residues Ser-242 and His-245 each coordinate AMP. Residue Asn-259 is glycosylated (N-linked (GlcNAc...) asparagine). Residues Gly-268 and Lys-272 each coordinate AMP. Position 300 (Asp-300) interacts with Mg(2+).

This sequence belongs to the inositol monophosphatase superfamily. It depends on Mg(2+) as a cofactor. Contains N-linked glycan resistant to endoglycosydase H.

It localises to the golgi apparatus. The protein resides in the trans-Golgi network membrane. The catalysed reaction is adenosine 3',5'-bisphosphate + H2O = AMP + phosphate. The protein operates within sulfur metabolism. Strongly inhibited by lithium. Exhibits 3'-nucleotidase activity toward adenosine 3',5'-bisphosphate (PAP), namely hydrolyzes adenosine 3',5'-bisphosphate into adenosine 5'-monophosphate (AMP) and a phosphate. May play a role in the formation of skeletal elements derived through endochondral ossification, possibly by clearing adenosine 3',5'-bisphosphate produced by Golgi sulfotransferases during glycosaminoglycan sulfation. Has no activity toward 3'-phosphoadenosine 5'-phosphosulfate (PAPS) or inositol phosphate (IP) substrates including I(1)P, I(1,4)P2, I(1,3,4)P3, I(1,4,5)P3 and I(1,3,4,5)P4. This is Golgi-resident adenosine 3',5'-bisphosphate 3'-phosphatase from Homo sapiens (Human).